The chain runs to 294 residues: Epimerase family protein SDR39U1 (294 aa).

Residues 31 to 32, 58 to 59, E77, R82, and V160 each bind NADP(+); these read SR and LA.

This sequence belongs to the NAD(P)-dependent epimerase/dehydratase family. SDR39U1 subfamily.

In terms of biological role, putative NADP-dependent oxidoreductase. This is Epimerase family protein SDR39U1 (SDR39U1) from Bos taurus (Bovine).